Reading from the N-terminus, the 89-residue chain is Glutamyl-tRNA(Gln) amidotransferase subunit C (89 aa).

Belongs to the GatC family. As to quaternary structure, heterotrimer of A, B and C subunits.

The catalysed reaction is L-glutamyl-tRNA(Gln) + L-glutamine + ATP + H2O = L-glutaminyl-tRNA(Gln) + L-glutamate + ADP + phosphate + H(+). It catalyses the reaction L-aspartyl-tRNA(Asn) + L-glutamine + ATP + H2O = L-asparaginyl-tRNA(Asn) + L-glutamate + ADP + phosphate + 2 H(+). Functionally, allows the formation of correctly charged Asn-tRNA(Asn) or Gln-tRNA(Gln) through the transamidation of misacylated Asp-tRNA(Asn) or Glu-tRNA(Gln) in organisms which lack either or both of asparaginyl-tRNA or glutaminyl-tRNA synthetases. The reaction takes place in the presence of glutamine and ATP through an activated phospho-Asp-tRNA(Asn) or phospho-Glu-tRNA(Gln). The protein is Glutamyl-tRNA(Gln) amidotransferase subunit C of Thermus thermophilus (strain ATCC 27634 / DSM 579 / HB8).